The primary structure comprises 486 residues: Hydrogenobyrinate a,c-diamide synthase (486 aa).

Pro residues predominate over residues 254–272 (SPPPPLPVPSPGAAPPDPL). The interval 254 to 284 (SPPPPLPVPSPGAAPPDPLVRPGRPRPQAPD) is disordered. A GATase cobBQ-type domain is found at 289 to 474 (RVAMASGAAF…LHTHWAAEPG (186 aa)). Catalysis depends on C372, which acts as the Nucleophile.

Belongs to the CobB/CbiA family. Mg(2+) is required as a cofactor.

It carries out the reaction hydrogenobyrinate + 2 L-glutamine + 2 ATP + 2 H2O = hydrogenobyrinate a,c-diamide + 2 L-glutamate + 2 ADP + 2 phosphate + 2 H(+). It functions in the pathway cofactor biosynthesis; adenosylcobalamin biosynthesis; cob(II)yrinate a,c-diamide from precorrin-2 (aerobic route): step 9/10. In terms of biological role, catalyzes the ATP-dependent amidation of the two carboxylate groups at positions a and c of hydrogenobyrinate, using either L-glutamine or ammonia as the nitrogen source. The polypeptide is Hydrogenobyrinate a,c-diamide synthase (Streptomyces coelicolor (strain ATCC BAA-471 / A3(2) / M145)).